The following is a 470-amino-acid chain: UDP-N-acetylmuramoylalanine--D-glutamate ligase (470 aa).

124-130 (GTNGKTT) contacts ATP.

This sequence belongs to the MurCDEF family.

The protein resides in the cytoplasm. It catalyses the reaction UDP-N-acetyl-alpha-D-muramoyl-L-alanine + D-glutamate + ATP = UDP-N-acetyl-alpha-D-muramoyl-L-alanyl-D-glutamate + ADP + phosphate + H(+). The protein operates within cell wall biogenesis; peptidoglycan biosynthesis. Its function is as follows. Cell wall formation. Catalyzes the addition of glutamate to the nucleotide precursor UDP-N-acetylmuramoyl-L-alanine (UMA). The polypeptide is UDP-N-acetylmuramoylalanine--D-glutamate ligase (Prochlorococcus marinus (strain SARG / CCMP1375 / SS120)).